Reading from the N-terminus, the 357-residue chain is Popeye domain-containing protein 1 (357 aa).

Residues 1-38 (MDTTAISPLTPLGVIPDLKNATSVPFNETACENWKEIH) lie on the Extracellular side of the membrane. N-linked (GlcNAc...) asparagine glycosylation is found at Asn-20 and Asn-27. Residues 39-59 (HLVFHVANICFAAGLVIPTTL) traverse the membrane as a helical segment. The Cytoplasmic portion of the chain corresponds to 60–62 (NLH). A helical membrane pass occupies residues 63-83 (MIFLRGLLTVGCALFIIWATL). The Extracellular portion of the chain corresponds to 84–89 (YRCALD). The helical transmembrane segment at 90 to 110 (IMIWNSVFLVVNLLHFIYLVY) threads the bilayer. Residues 111–357 (KRRPIKIEKE…AEKLELQRLP (247 aa)) lie on the Cytoplasmic side of the membrane. Residues 309–323 (GTSSSSSLRPGRTSP) are compositionally biased toward low complexity. The segment at 309–357 (GTSSSSSLRPGRTSPYLRTSAKMKPIEESVEDDVFEAPSAEKLELQRLP) is disordered. The segment covering 347 to 357 (SAEKLELQRLP) has biased composition (basic and acidic residues).

Belongs to the popeye family. Homodimer. Homodimerization requires the C-terminus cytoplasmic region. In terms of tissue distribution, expressed in the heart and skeletal muscle (at protein level). Isoform 1 and isoform 4: expressed in heart, muscle, brain, stomach, kidney, lung and spleen.

Its subcellular location is the lateral cell membrane. It localises to the cell junction. The protein localises to the tight junction. The protein resides in the membrane. It is found in the cell membrane. Its subcellular location is the sarcolemma. It localises to the caveola. Its function is as follows. Cell adhesion molecule involved in the establishment and/or maintenance of cell integrity. Involved in the formation and regulation of the tight junction (TJ) paracellular permeability barrier in epithelial cells. Induces primordial adhesive contact and aggregation of epithelial cells in a Ca(2+)-independent manner. Involved in epithelial movement during corneal sheet formation and regeneration. May play a role in VAMP3-mediated vesicular transport and recycling of receptor molecules. May play a role in the regulation of cell shape and movement by modulating the Rho-GTPase activity. May be involved in skeletal muscle and heart development as well as in the maintenance of heart function. May also be involved in striated muscle regeneration and in the regulation of cell spreading. The sequence is that of Popeye domain-containing protein 1 (POPDC1) from Gallus gallus (Chicken).